Reading from the N-terminus, the 96-residue chain is Small ribosomal subunit protein bS6 (96 aa).

This sequence belongs to the bacterial ribosomal protein bS6 family.

Binds together with bS18 to 16S ribosomal RNA. The polypeptide is Small ribosomal subunit protein bS6 (Natranaerobius thermophilus (strain ATCC BAA-1301 / DSM 18059 / JW/NM-WN-LF)).